The following is a 249-amino-acid chain: Phosphate import ATP-binding protein PstB 2 (249 aa).

Residues 4 to 244 (FDIENLDLYY…PSDDRTRGYV (241 aa)) form the ABC transporter domain. Residue 36–43 (GPSGCGKS) coordinates ATP.

Belongs to the ABC transporter superfamily. Phosphate importer (TC 3.A.1.7) family. In terms of assembly, the complex is composed of two ATP-binding proteins (PstB), two transmembrane proteins (PstC and PstA) and a solute-binding protein (PstS).

It localises to the cell inner membrane. The enzyme catalyses phosphate(out) + ATP + H2O = ADP + 2 phosphate(in) + H(+). Functionally, part of the ABC transporter complex PstSACB involved in phosphate import. Responsible for energy coupling to the transport system. This chain is Phosphate import ATP-binding protein PstB 2, found in Vibrio vulnificus (strain CMCP6).